The sequence spans 173 residues: Small ribosomal subunit protein uS5 (173 aa).

An S5 DRBM domain is found at 17–80 (WQERVIQIRR…SDAKKHVVDV (64 aa)).

Belongs to the universal ribosomal protein uS5 family. In terms of assembly, part of the 30S ribosomal subunit. Contacts proteins S4 and S8.

Functionally, with S4 and S12 plays an important role in translational accuracy. Its function is as follows. Located at the back of the 30S subunit body where it stabilizes the conformation of the head with respect to the body. This chain is Small ribosomal subunit protein uS5, found in Picosynechococcus sp. (strain ATCC 27264 / PCC 7002 / PR-6) (Agmenellum quadruplicatum).